Reading from the N-terminus, the 87-residue chain is U3-theraphotoxin-Hhn1b (87 aa).

The first 24 residues, 1–24, serve as a signal peptide directing secretion; it reads MVNMKASMFLTFAGLVLLFVVCYA. A propeptide spanning residues 25 to 52 is cleaved from the precursor; it reads SESEEKEFPREMLSSIFAVDNDFKQEER. Intrachain disulfides connect Cys-54-Cys-67 and Cys-61-Cys-72.

This sequence belongs to the neurotoxin 10 (Hwtx-1) family. 51 (Hntx-8) subfamily. Hntx-8 sub-subfamily. Expressed by the venom gland.

It is found in the secreted. Its function is as follows. Ion channel inhibitor. This is U3-theraphotoxin-Hhn1b from Cyriopagopus hainanus (Chinese bird spider).